We begin with the raw amino-acid sequence, 303 residues long: tRNA dimethylallyltransferase (303 aa).

An ATP-binding site is contributed by 9–16 (GPTAVGKT). 11–16 (TAVGKT) provides a ligand contact to substrate. Residues 34–37 (DSRQ) form an interaction with substrate tRNA region.

Belongs to the IPP transferase family. As to quaternary structure, monomer. Mg(2+) serves as cofactor.

It carries out the reaction adenosine(37) in tRNA + dimethylallyl diphosphate = N(6)-dimethylallyladenosine(37) in tRNA + diphosphate. In terms of biological role, catalyzes the transfer of a dimethylallyl group onto the adenine at position 37 in tRNAs that read codons beginning with uridine, leading to the formation of N6-(dimethylallyl)adenosine (i(6)A). The sequence is that of tRNA dimethylallyltransferase from Petrotoga mobilis (strain DSM 10674 / SJ95).